Here is an 88-residue protein sequence, read N- to C-terminus: Large ribosomal subunit protein bL27 (88 aa).

Residues 1–23 are disordered; the sequence is MAHKKGTGSTRNGRDSNAQRLGV. Residues 7–19 show a composition bias toward polar residues; it reads TGSTRNGRDSNAQ.

Belongs to the bacterial ribosomal protein bL27 family.

In Synechococcus elongatus (strain ATCC 33912 / PCC 7942 / FACHB-805) (Anacystis nidulans R2), this protein is Large ribosomal subunit protein bL27 (rpmA).